The primary structure comprises 397 residues: GTPase Obg (397 aa).

In terms of domain architecture, Obg spans 1-159; that stretch reads MKFVDEATII…RNLRLELKVL (159 aa). The tract at residues 128 to 148 is disordered; it reads TRFKSSVNRAPRQTSKGSEGE. Over residues 129 to 144 the composition is skewed to polar residues; the sequence is RFKSSVNRAPRQTSKG. The region spanning 160–333 is the OBG-type G domain; that stretch reads ADVGLLGLPN…LVQAVMRWIE (174 aa). Residues 166-173, 191-195, 213-216, 283-286, and 314-316 contribute to the GTP site; these read GLPNAGKS, FTTLV, DIPG, NKVD, and SAL. 2 residues coordinate Mg(2+): S173 and T193. The segment covering 336-347 has biased composition (acidic residues); that stretch reads AEQEADNPDFAE. The segment at 336–397 is disordered; the sequence is AEQEADNPDF…YDVEVVYAPE (62 aa). The segment covering 349–370 has biased composition (basic and acidic residues); sequence EAARRRRMDEEARQKIEADRQA. The segment covering 378–390 has biased composition (acidic residues); it reads DDDDDFDDDDYDV.

It belongs to the TRAFAC class OBG-HflX-like GTPase superfamily. OBG GTPase family. Monomer. The cofactor is Mg(2+).

Its subcellular location is the cytoplasm. An essential GTPase which binds GTP, GDP and possibly (p)ppGpp with moderate affinity, with high nucleotide exchange rates and a fairly low GTP hydrolysis rate. Plays a role in control of the cell cycle, stress response, ribosome biogenesis and in those bacteria that undergo differentiation, in morphogenesis control. This Marinobacter nauticus (strain ATCC 700491 / DSM 11845 / VT8) (Marinobacter aquaeolei) protein is GTPase Obg.